Here is a 122-residue protein sequence, read N- to C-terminus: Large ribosomal subunit protein uL14 (122 aa).

It belongs to the universal ribosomal protein uL14 family. In terms of assembly, part of the 50S ribosomal subunit. Forms a cluster with proteins L3 and L19. In the 70S ribosome, L14 and L19 interact and together make contacts with the 16S rRNA in bridges B5 and B8.

Binds to 23S rRNA. Forms part of two intersubunit bridges in the 70S ribosome. The polypeptide is Large ribosomal subunit protein uL14 (Chloroherpeton thalassium (strain ATCC 35110 / GB-78)).